Here is a 327-residue protein sequence, read N- to C-terminus: Serine/threonine-protein phosphatase PP1-beta catalytic subunit (327 aa).

N-acetylalanine is present on alanine 2. Positions 63, 65, 91, and 123 each coordinate Mn(2+). Residue histidine 124 is the Proton donor of the active site. The Mn(2+) site is built by histidine 172 and histidine 247. Residues 305–327 (QYGGLNSGRPVTPPRTANPPKKR) form a disordered region.

The protein belongs to the PPP phosphatase family. PP-1 subfamily. The cofactor is Mn(2+).

It is found in the cytoplasm. The protein localises to the nucleus. The enzyme catalyses O-phospho-L-seryl-[protein] + H2O = L-seryl-[protein] + phosphate. It carries out the reaction O-phospho-L-threonyl-[protein] + H2O = L-threonyl-[protein] + phosphate. Its function is as follows. Protein phosphatase that associates with over 200 regulatory proteins to form highly specific holoenzymes which dephosphorylate hundreds of biological targets. Protein phosphatase (PP1) is essential for cell division, it participates in the regulation of glycogen metabolism, muscle contractility and protein synthesis. Involved in regulation of ionic conductances and long-term synaptic plasticity. This chain is Serine/threonine-protein phosphatase PP1-beta catalytic subunit (ppp1cb), found in Xenopus laevis (African clawed frog).